A 124-amino-acid polypeptide reads, in one-letter code: Max-like protein 1 (124 aa).

Residues 1–10 (MSDMSDLEDD) show a composition bias toward acidic residues. The segment at 1-44 (MSDMSDLEDDQTGHCGSGEHSGPFDPKRHAREQHNALERRRRDN) is disordered. Residues 29–42 (HAREQHNALERRRR) form a basic motif region. Positions 29–82 (HAREQHNALERRRRDNIKDMYTSLREVVPDANGERVQASRAVILKKAIESIEKG) constitute a bHLH domain. A compositionally biased stretch (basic and acidic residues) spans 32–44 (EQHNALERRRRDN). The helix-loop-helix motif stretch occupies residues 43-82 (DNIKDMYTSLREVVPDANGERVQASRAVILKKAIESIEKG). Residues 86 to 113 (SATLSVDVAEQESKNAKLREEIARLKAK) are a coiled coil.

Belongs to the MAX family. In terms of assembly, heterodimer with mdl-1 in presence and absence of DNA. Interacts with tdpt-1; the interaction promotes axon regeneration after injury. Expressed in D-type motor neurons.

It localises to the nucleus. Its function is as follows. Transcriptional regulator which binds to the E box motif 5'-CACGTG-3', when in a heterodimeric complex with mdl-1. Involved in the control of lifespan in response to dietary restriction, the decline in protein homeostasis associated with normal aging and may overlap with the insulin-like signaling pathway. Involved in promoting infection by the microsporidian pathogen N.parisii. Required for the expression of svh-2 and the promotion of axon regeneration after injury. The protein is Max-like protein 1 of Caenorhabditis elegans.